Consider the following 82-residue polypeptide: Putative membrane protein insertion efficiency factor (82 aa).

It belongs to the UPF0161 family.

It is found in the cell inner membrane. In terms of biological role, could be involved in insertion of integral membrane proteins into the membrane. The sequence is that of Putative membrane protein insertion efficiency factor from Rickettsia rickettsii (strain Iowa).